Reading from the N-terminus, the 162-residue chain is Phosphopantetheine adenylyltransferase (162 aa).

Residue Ser-11 coordinates substrate. ATP-binding positions include 11–12 (SF) and His-19. Positions 43, 76, and 90 each coordinate substrate. ATP-binding positions include 91 to 93 (GLR), Glu-101, and 126 to 132 (HLYISSS).

Belongs to the bacterial CoaD family. In terms of assembly, homohexamer. It depends on Mg(2+) as a cofactor.

It is found in the cytoplasm. The catalysed reaction is (R)-4'-phosphopantetheine + ATP + H(+) = 3'-dephospho-CoA + diphosphate. The protein operates within cofactor biosynthesis; coenzyme A biosynthesis; CoA from (R)-pantothenate: step 4/5. Functionally, reversibly transfers an adenylyl group from ATP to 4'-phosphopantetheine, yielding dephospho-CoA (dPCoA) and pyrophosphate. The chain is Phosphopantetheine adenylyltransferase from Streptococcus pneumoniae (strain ATCC 700669 / Spain 23F-1).